We begin with the raw amino-acid sequence, 527 residues long: MTNQAAEVAKRRTFAIISHPDAGKTTITEKLLLMGKAIAVAGTVKSRKSDRHATSDWMEMEKQRGISITTSVMQFPYREHMINLLDTPGHEDFSEDTYRTLTAVDSALMVLDGGKGVEPRTIALMDVCRLRDTPIVSFINKLDRDIRDPIELLDEIEAVLKIKAAPITWPIGCYRDFKGVYHLAGDYIIVYTPGHGHERTEAKIIEKLDSDEARAHLGDEYDRFLEQLELVQGACHEFDQDEFINGQLTPVFFGTALGNFGVDHVLDAVVDWAPRPLARVAHERTVEPVEEKFTGFVFKIQANMDPKHRDRIAFMRICSGKYEKGMKMRHVRTGKDLRIGDALTFFSSEREQLEEAYAGDIIGLHNHGTIQIGDTFTEGEALGFTGIPHFAPELFRRVRLKDPLKSKQLRQGLQQLAEEGATQVFFPERSNDIILGAVGVLQFDVVASRLKEEYKVECAYEPITVWSARWISCDDKKKLEDFQVKAMENLAIDGGGHLTYLAPTRVNLSLMEERWPDVKFRATREHH.

Residues 9-277 enclose the tr-type G domain; it reads AKRRTFAIIS…AVVDWAPRPL (269 aa). GTP is bound by residues 18-25, 86-90, and 140-143; these read SHPDAGKT, DTPGH, and NKLD.

This sequence belongs to the TRAFAC class translation factor GTPase superfamily. Classic translation factor GTPase family. PrfC subfamily.

The protein localises to the cytoplasm. Increases the formation of ribosomal termination complexes and stimulates activities of RF-1 and RF-2. It binds guanine nucleotides and has strong preference for UGA stop codons. It may interact directly with the ribosome. The stimulation of RF-1 and RF-2 is significantly reduced by GTP and GDP, but not by GMP. This chain is Peptide chain release factor 3, found in Pseudomonas putida (strain W619).